Reading from the N-terminus, the 570-residue chain is Proline--tRNA ligase (570 aa).

Belongs to the class-II aminoacyl-tRNA synthetase family. ProS type 1 subfamily. As to quaternary structure, homodimer.

Its subcellular location is the cytoplasm. It catalyses the reaction tRNA(Pro) + L-proline + ATP = L-prolyl-tRNA(Pro) + AMP + diphosphate. Functionally, catalyzes the attachment of proline to tRNA(Pro) in a two-step reaction: proline is first activated by ATP to form Pro-AMP and then transferred to the acceptor end of tRNA(Pro). As ProRS can inadvertently accommodate and process non-cognate amino acids such as alanine and cysteine, to avoid such errors it has two additional distinct editing activities against alanine. One activity is designated as 'pretransfer' editing and involves the tRNA(Pro)-independent hydrolysis of activated Ala-AMP. The other activity is designated 'posttransfer' editing and involves deacylation of mischarged Ala-tRNA(Pro). The misacylated Cys-tRNA(Pro) is not edited by ProRS. In Clostridium botulinum (strain Eklund 17B / Type B), this protein is Proline--tRNA ligase.